The chain runs to 111 residues: Large ribosomal subunit protein uL22 (111 aa).

It belongs to the universal ribosomal protein uL22 family. In terms of assembly, part of the 50S ribosomal subunit.

Functionally, this protein binds specifically to 23S rRNA; its binding is stimulated by other ribosomal proteins, e.g. L4, L17, and L20. It is important during the early stages of 50S assembly. It makes multiple contacts with different domains of the 23S rRNA in the assembled 50S subunit and ribosome. Its function is as follows. The globular domain of the protein is located near the polypeptide exit tunnel on the outside of the subunit, while an extended beta-hairpin is found that lines the wall of the exit tunnel in the center of the 70S ribosome. The protein is Large ribosomal subunit protein uL22 of Pelobacter propionicus (strain DSM 2379 / NBRC 103807 / OttBd1).